A 338-amino-acid chain; its full sequence is Probable replication factor C subunit 2 (338 aa).

60–67 (GPPGTGKT) lines the ATP pocket.

It belongs to the activator 1 small subunits family. Heteropentamer of various rfc subunits that forms a complex (RFC) with PCNA in the presence of ATP.

It localises to the nucleus. The elongation of primed DNA templates by DNA polymerase delta and epsilon requires the action of the accessory proteins PCNA and activator 1. The protein is Probable replication factor C subunit 2 (rfc2) of Dictyostelium discoideum (Social amoeba).